The primary structure comprises 116 residues: Ribosome-binding factor A (116 aa).

It belongs to the RbfA family. As to quaternary structure, monomer. Binds 30S ribosomal subunits, but not 50S ribosomal subunits or 70S ribosomes.

It is found in the cytoplasm. Its function is as follows. One of several proteins that assist in the late maturation steps of the functional core of the 30S ribosomal subunit. Associates with free 30S ribosomal subunits (but not with 30S subunits that are part of 70S ribosomes or polysomes). Required for efficient processing of 16S rRNA. May interact with the 5'-terminal helix region of 16S rRNA. This Enterococcus faecalis (strain ATCC 700802 / V583) protein is Ribosome-binding factor A.